A 410-amino-acid chain; its full sequence is Chlorobenzene dioxygenase, ferredoxin reductase component (410 aa).

4 to 35 (HVAIIGNGVAGFTTAQALRAEGFEGRISLIGN) provides a ligand contact to FAD. Position 145–173 (145–173 (RLVIAGGGLIGCEVATTARKLGLAVTILE)) interacts with NAD(+).

This sequence belongs to the bacterial ring-hydroxylating dioxygenase ferredoxin reductase family. In terms of assembly, this dioxygenase system consists of four proteins: the two subunits of the oxygenase component (TecA1 and TecA2), a ferredoxin (TecA3) and a ferredoxin reductase (TecA4). FAD serves as cofactor.

It carries out the reaction 2 reduced [2Fe-2S]-[ferredoxin] + NAD(+) + H(+) = 2 oxidized [2Fe-2S]-[ferredoxin] + NADH. It participates in aromatic compound metabolism. Its function is as follows. Part of the chlorobenzene dioxygenase system that catalyzes the dihydroxylation of a range of aromatic compounds, including chlorinated benzenes and toluenes, and dinuclear aromatics such as biphenyl and dibenzo-p-dioxin. The sequence is that of Chlorobenzene dioxygenase, ferredoxin reductase component from Cupriavidus sp. (strain PS12).